The sequence spans 242 residues: Segregation and condensation protein A (242 aa).

It belongs to the ScpA family. As to quaternary structure, component of a cohesin-like complex composed of ScpA, ScpB and the Smc homodimer, in which ScpA and ScpB bind to the head domain of Smc. The presence of the three proteins is required for the association of the complex with DNA.

It localises to the cytoplasm. Its function is as follows. Participates in chromosomal partition during cell division. May act via the formation of a condensin-like complex containing Smc and ScpB that pull DNA away from mid-cell into both cell halves. The polypeptide is Segregation and condensation protein A (Streptococcus pneumoniae serotype 2 (strain D39 / NCTC 7466)).